The sequence spans 203 residues: Glycerol-3-phosphate acyltransferase (203 aa).

The next 4 membrane-spanning stretches (helical) occupy residues 6-26 (LTLLMIVAAYLAGSVSSAVLV), 82-102 (AISLGLIAIAACLGHIYPIFF), 118-138 (APIGDDLAICLMASWVVLVLI), and 141-161 (YSSLAAIITALLAPLYTWWLD).

This sequence belongs to the PlsY family. As to quaternary structure, probably interacts with PlsX.

The protein localises to the cell inner membrane. It carries out the reaction an acyl phosphate + sn-glycerol 3-phosphate = a 1-acyl-sn-glycero-3-phosphate + phosphate. The protein operates within lipid metabolism; phospholipid metabolism. In terms of biological role, catalyzes the transfer of an acyl group from acyl-phosphate (acyl-PO(4)) to glycerol-3-phosphate (G3P) to form lysophosphatidic acid (LPA). This enzyme utilizes acyl-phosphate as fatty acyl donor, but not acyl-CoA or acyl-ACP. The protein is Glycerol-3-phosphate acyltransferase of Shewanella sp. (strain MR-7).